The primary structure comprises 141 residues: Putative antiporter subunit mnhB2 (141 aa).

4 helical membrane-spanning segments follow: residues 10 to 30 (TVTK…FFAG), 35 to 55 (GGGF…FLAF), 70 to 90 (KLMI…VFFG), and 116 to 136 (LFEL…MLAL).

The protein belongs to the CPA3 antiporters (TC 2.A.63) subunit B family. May form a heterooligomeric complex that consists of seven subunits: mnhA2, mnhB2, mnhC2, mnhD2, mnhE2, mnhF2 and mnhG2.

The protein localises to the cell membrane. The chain is Putative antiporter subunit mnhB2 (mnhB2) from Staphylococcus haemolyticus (strain JCSC1435).